Consider the following 675-residue polypeptide: Putative elongation factor TypA-like SVR3, chloroplastic (675 aa).

Residues 1–58 (MELSLSTSSASPAVLRRQASPLLHKQQVLGVSFASALKPGGGALRFPSRRPLPRPITC) constitute a chloroplast transit peptide. Residues 43 to 76 (ALRFPSRRPLPRPITCSASPSTAEPASEVKKKQL) are disordered. Low complexity predominate over residues 59 to 68 (SASPSTAEPA). A tr-type G domain is found at 80 to 275 (DNVRNIAIVA…AIIRCVPGPN (196 aa)).

This sequence belongs to the TRAFAC class translation factor GTPase superfamily. Classic translation factor GTPase family. BipA subfamily.

Its subcellular location is the plastid. The protein localises to the chloroplast. Putative chloroplastic elongation factor involved in response to chilling stress. Required for proper chloroplast rRNA processing and/or translation at low temperature. Involved in plastid protein homeostasis. This is Putative elongation factor TypA-like SVR3, chloroplastic (SVR3) from Arabidopsis thaliana (Mouse-ear cress).